The following is a 234-amino-acid chain: 2,3,4,5-tetrahydropyridine-2,6-dicarboxylate N-acetyltransferase (234 aa).

Belongs to the transferase hexapeptide repeat family. DapH subfamily.

The catalysed reaction is (S)-2,3,4,5-tetrahydrodipicolinate + acetyl-CoA + H2O = L-2-acetamido-6-oxoheptanedioate + CoA. The protein operates within amino-acid biosynthesis; L-lysine biosynthesis via DAP pathway; LL-2,6-diaminopimelate from (S)-tetrahydrodipicolinate (acetylase route): step 1/3. Its function is as follows. Catalyzes the transfer of an acetyl group from acetyl-CoA to tetrahydrodipicolinate. This Lacticaseibacillus casei (strain BL23) (Lactobacillus casei) protein is 2,3,4,5-tetrahydropyridine-2,6-dicarboxylate N-acetyltransferase.